The chain runs to 233 residues: Bcl-2-like protein 1 (233 aa).

Positions 4-24 (SNRELVVDFLSYKLSQKGYSW) match the BH4 motif. Positions 27–73 (FSDVEENRTEAPEETEPERETPSAINGNPSWHLADSPAVNGATGHSS) are disordered. Ser49 is modified (phosphoserine; by PLK3). Ser62 carries the phosphoserine; by CDK1 modification. The BH3 signature appears at 86 to 100 (VKQALREAGDEFELR). Residues 129-148 (ELFRDGVNWGRIVAFFSFGG) carry the BH1 motif. The short motif at 180-195 (PWIQENGGWDTFVDLY) is the BH2 element. A helical membrane pass occupies residues 210 to 226 (FNRWFLTGMTVAGVVLL).

Belongs to the Bcl-2 family. Homodimer. Interacts with BCL2L11. Interacts with BAD. Interacts with PGAM5. Interacts with HEBP2. Interacts with p53/TP53 and BBC3; interaction with BBC3 disrupts the interaction with p53/TP53. Interacts with ATP5F1A and ATP5F1B; the interactions mediate the association of isoform Bcl-X(L) with the mitochondrial membrane ATP synthase F(1)F(0) ATP synthase. Interacts with VDAC1. Interacts with BCL2L11 (via BH3). Interacts with RNF183. Interacts with GIMAP3/IAN4 and GIMAP5/IAN5. Interacts with GIMAP5 and HSPA8/HSC70; the interaction between HSPA8 and BCL2L1 is impaired in the absence of GIMAP5. Interacts with isoform 4 of CLU; this interaction releases and activates BAX and promotes cell death. As to quaternary structure, forms heterodimers with BAX, BAK or BCL2; heterodimerization with BAX does not seem to be required for anti-apoptotic activity. Interacts with isoform 1 of SIVA1; the interaction inhibits the anti-apoptotic activity. Interacts with IKZF3. Interacts with RTL10/BOP. Interacts with DNM1L and CLTA; DNM1L and BCL2L1 isoform BCL-X(L) may form a complex in synaptic vesicles that also contains clathrin and MFF. Interacts (via the loop between motifs BH4 and BH3) with NLRP1 (via LRR repeats), but not with NLRP2, NLRP3, NLRP4, PYCARD, nor MEFV. Interacts with BECN1. Post-translationally, proteolytically cleaved by caspases during apoptosis. The cleaved protein, lacking the BH4 motif, has pro-apoptotic activity. Phosphorylated on Ser-62 by CDK1. This phosphorylation is partial in normal mitotic cells, but complete in G2-arrested cells upon DNA-damage, thus promoting subsequent apoptosis probably by triggering caspases-mediated proteolysis. Phosphorylated by PLK3, leading to regulate the G2 checkpoint and progression to cytokinesis during mitosis. Phosphorylation at Ser-49 appears during the S phase and G2, disappears rapidly in early mitosis during prometaphase, metaphase and early anaphase, and re-appears during telophase and cytokinesis. In terms of processing, ubiquitinated by RNF183 during prolonged ER stress, leading to degradation by the proteosome. In terms of tissue distribution, expressed in most tissues. Bcl-X(beta) is specifically expressed in cerebellum, heart, and thymus. In the ovary, the predominant form is Bcl-X(L), with a small but detectable level of Bcl-X(S).

It localises to the mitochondrion inner membrane. It is found in the mitochondrion outer membrane. Its subcellular location is the mitochondrion matrix. The protein localises to the cytoplasmic vesicle. The protein resides in the secretory vesicle. It localises to the synaptic vesicle membrane. It is found in the cytoplasm. Its subcellular location is the cytosol. The protein localises to the cytoskeleton. The protein resides in the microtubule organizing center. It localises to the centrosome. It is found in the nucleus membrane. Potent inhibitor of cell death. Inhibits activation of caspases. Appears to regulate cell death by blocking the voltage-dependent anion channel (VDAC) by binding to it and preventing the release of the caspase activator, CYC1, from the mitochondrial membrane. Also acts as a regulator of G2 checkpoint and progression to cytokinesis during mitosis. Functionally, isoform Bcl-X(L) also regulates presynaptic plasticity, including neurotransmitter release and recovery, number of axonal mitochondria as well as size and number of synaptic vesicle clusters. During synaptic stimulation, increases ATP availability from mitochondria through regulation of mitochondrial membrane ATP synthase F(1)F(0) activity and regulates endocytic vesicle retrieval in hippocampal neurons through association with DMN1L and stimulation of its GTPase activity in synaptic vesicles. May attenuate inflammation impairing NLRP1-inflammasome activation, hence CASP1 activation and IL1B release. Its function is as follows. Isoform Bcl-X(S) promotes apoptosis. This chain is Bcl-2-like protein 1 (Bcl2l1), found in Rattus norvegicus (Rat).